A 531-amino-acid chain; its full sequence is tRNA(Ile)-lysidine synthase (531 aa).

32–37 lines the ATP pocket; the sequence is SGGMDS.

This sequence belongs to the tRNA(Ile)-lysidine synthase family.

Its subcellular location is the cytoplasm. The catalysed reaction is cytidine(34) in tRNA(Ile2) + L-lysine + ATP = lysidine(34) in tRNA(Ile2) + AMP + diphosphate + H(+). In terms of biological role, ligates lysine onto the cytidine present at position 34 of the AUA codon-specific tRNA(Ile) that contains the anticodon CAU, in an ATP-dependent manner. Cytidine is converted to lysidine, thus changing the amino acid specificity of the tRNA from methionine to isoleucine. The chain is tRNA(Ile)-lysidine synthase from Blochmanniella floridana.